Consider the following 359-residue polypeptide: 3-isopropylmalate dehydrogenase (359 aa).

Substrate-binding residues include Arg97, Arg107, Arg135, and Asp224. Residues Asp224, Asp248, and Asp252 each contribute to the Mg(2+) site. An NAD(+)-binding site is contributed by 282–294 (GSAPDIAGKDIAN).

This sequence belongs to the isocitrate and isopropylmalate dehydrogenases family. LeuB type 1 subfamily. In terms of assembly, homodimer. Requires Mg(2+) as cofactor. Mn(2+) is required as a cofactor.

The protein localises to the cytoplasm. It carries out the reaction (2R,3S)-3-isopropylmalate + NAD(+) = 4-methyl-2-oxopentanoate + CO2 + NADH. It participates in amino-acid biosynthesis; L-leucine biosynthesis; L-leucine from 3-methyl-2-oxobutanoate: step 3/4. Its function is as follows. Catalyzes the oxidation of 3-carboxy-2-hydroxy-4-methylpentanoate (3-isopropylmalate) to 3-carboxy-4-methyl-2-oxopentanoate. The product decarboxylates to 4-methyl-2 oxopentanoate. This is 3-isopropylmalate dehydrogenase from Prochlorococcus marinus (strain NATL2A).